A 355-amino-acid chain; its full sequence is Histidinol-phosphate aminotransferase (355 aa).

Position 218 is an N6-(pyridoxal phosphate)lysine (K218).

It belongs to the class-II pyridoxal-phosphate-dependent aminotransferase family. Histidinol-phosphate aminotransferase subfamily. As to quaternary structure, homodimer. The cofactor is pyridoxal 5'-phosphate.

It catalyses the reaction L-histidinol phosphate + 2-oxoglutarate = 3-(imidazol-4-yl)-2-oxopropyl phosphate + L-glutamate. It participates in amino-acid biosynthesis; L-histidine biosynthesis; L-histidine from 5-phospho-alpha-D-ribose 1-diphosphate: step 7/9. This chain is Histidinol-phosphate aminotransferase, found in Pelodictyon phaeoclathratiforme (strain DSM 5477 / BU-1).